The primary structure comprises 185 residues: Large ribosomal subunit protein uL5 (185 aa).

Belongs to the universal ribosomal protein uL5 family. Part of the 50S ribosomal subunit; contacts the 5S rRNA and probably tRNA. Forms a bridge to the 30S subunit in the 70S ribosome.

In terms of biological role, this is one of the proteins that bind and probably mediate the attachment of the 5S RNA into the large ribosomal subunit, where it forms part of the central protuberance. In the 70S ribosome it contacts protein S13 of the 30S subunit (bridge B1b), connecting the 2 subunits; this bridge is implicated in subunit movement. May contact the P site tRNA; the 5S rRNA and some of its associated proteins might help stabilize positioning of ribosome-bound tRNAs. This chain is Large ribosomal subunit protein uL5, found in Haloquadratum walsbyi (strain DSM 16790 / HBSQ001).